Here is a 360-residue protein sequence, read N- to C-terminus: Peptide chain release factor 1 (360 aa).

N5-methylglutamine is present on Gln234.

Belongs to the prokaryotic/mitochondrial release factor family. In terms of processing, methylated by PrmC. Methylation increases the termination efficiency of RF1.

It is found in the cytoplasm. In terms of biological role, peptide chain release factor 1 directs the termination of translation in response to the peptide chain termination codons UAG and UAA. This Renibacterium salmoninarum (strain ATCC 33209 / DSM 20767 / JCM 11484 / NBRC 15589 / NCIMB 2235) protein is Peptide chain release factor 1.